The sequence spans 201 residues: Translation initiation factor IF-3 (201 aa).

This sequence belongs to the IF-3 family. As to quaternary structure, monomer.

Its subcellular location is the cytoplasm. In terms of biological role, IF-3 binds to the 30S ribosomal subunit and shifts the equilibrium between 70S ribosomes and their 50S and 30S subunits in favor of the free subunits, thus enhancing the availability of 30S subunits on which protein synthesis initiation begins. This chain is Translation initiation factor IF-3, found in Mycoplasma pneumoniae (strain ATCC 29342 / M129 / Subtype 1) (Mycoplasmoides pneumoniae).